Consider the following 452-residue polypeptide: Bifunctional protein GlmU (452 aa).

Residues 1 to 226 (MVAVAILAAG…SQEILGINDR (226 aa)) form a pyrophosphorylase region. UDP-N-acetyl-alpha-D-glucosamine-binding positions include 7–10 (LAAG), lysine 21, glutamine 73, and 78–79 (GT). Aspartate 103 contributes to the Mg(2+) binding site. Residues glycine 140, glutamate 155, asparagine 170, and asparagine 224 each contribute to the UDP-N-acetyl-alpha-D-glucosamine site. Asparagine 224 is a binding site for Mg(2+). A linker region spans residues 227–247 (LQLADSFRILQERIRQQWMLA). Residues 248–452 (GVTLVDPTSI…ENWSTPTTEQ (205 aa)) form an N-acetyltransferase region. 2 residues coordinate UDP-N-acetyl-alpha-D-glucosamine: arginine 329 and lysine 347. Histidine 359 functions as the Proton acceptor in the catalytic mechanism. 2 residues coordinate UDP-N-acetyl-alpha-D-glucosamine: tyrosine 362 and asparagine 373. Acetyl-CoA is bound by residues alanine 376, 382–383 (NY), alanine 419, and arginine 436.

The protein in the N-terminal section; belongs to the N-acetylglucosamine-1-phosphate uridyltransferase family. In the C-terminal section; belongs to the transferase hexapeptide repeat family. Homotrimer. Mg(2+) serves as cofactor.

It is found in the cytoplasm. It catalyses the reaction alpha-D-glucosamine 1-phosphate + acetyl-CoA = N-acetyl-alpha-D-glucosamine 1-phosphate + CoA + H(+). The catalysed reaction is N-acetyl-alpha-D-glucosamine 1-phosphate + UTP + H(+) = UDP-N-acetyl-alpha-D-glucosamine + diphosphate. It functions in the pathway nucleotide-sugar biosynthesis; UDP-N-acetyl-alpha-D-glucosamine biosynthesis; N-acetyl-alpha-D-glucosamine 1-phosphate from alpha-D-glucosamine 6-phosphate (route II): step 2/2. It participates in nucleotide-sugar biosynthesis; UDP-N-acetyl-alpha-D-glucosamine biosynthesis; UDP-N-acetyl-alpha-D-glucosamine from N-acetyl-alpha-D-glucosamine 1-phosphate: step 1/1. Its pathway is bacterial outer membrane biogenesis; LPS lipid A biosynthesis. Functionally, catalyzes the last two sequential reactions in the de novo biosynthetic pathway for UDP-N-acetylglucosamine (UDP-GlcNAc). The C-terminal domain catalyzes the transfer of acetyl group from acetyl coenzyme A to glucosamine-1-phosphate (GlcN-1-P) to produce N-acetylglucosamine-1-phosphate (GlcNAc-1-P), which is converted into UDP-GlcNAc by the transfer of uridine 5-monophosphate (from uridine 5-triphosphate), a reaction catalyzed by the N-terminal domain. The protein is Bifunctional protein GlmU of Synechococcus sp. (strain ATCC 27144 / PCC 6301 / SAUG 1402/1) (Anacystis nidulans).